A 231-amino-acid polypeptide reads, in one-letter code: Orotidine 5'-phosphate decarboxylase (231 aa).

Residues D12, K34, 61–70 (DMKLLDIDNT), T116, R177, Q186, G206, and R207 each bind substrate. The Proton donor role is filled by K63.

The protein belongs to the OMP decarboxylase family. Type 1 subfamily. As to quaternary structure, homodimer.

It catalyses the reaction orotidine 5'-phosphate + H(+) = UMP + CO2. It functions in the pathway pyrimidine metabolism; UMP biosynthesis via de novo pathway; UMP from orotate: step 2/2. Catalyzes the decarboxylation of orotidine 5'-monophosphate (OMP) to uridine 5'-monophosphate (UMP). This is Orotidine 5'-phosphate decarboxylase from Allorhizobium ampelinum (strain ATCC BAA-846 / DSM 112012 / S4) (Agrobacterium vitis (strain S4)).